The chain runs to 455 residues: MAAREEVLALQAEVARREEELSSLKHRLAAALLAEQESERLLPVSPLPPKAALSQDEILRYSRQLVLPELGVQGQLRLATASVLIVGCGGLGCPLAQYLAAAGVGRLGLVDYDVVEVSNLARQVLHGEALAGQAKVFSAAASLRRLNSAVECVPYAQALTPATALDLVRRYDVVADCSDNVPTRYLVNDACVLAGRPLVSASALRFEGQITVYHYGGGPCYRCVFPQPPPAETVTNCADGGVLGVVTGVLGCLQALEVLKIAAGLGPSYSGSLLLFDALRGLFRRIQLRRRRPDCAACGERPTVTELQDYEGFCGSSATDKCRSLQLLSPEERVSVIDYKRLLDSGSPHLLLDVRPQVEVDICRLPHALHIPLKHLERRDAESLKLLGEAIREGKQGTQEGASLPIYVICKLGNDSQKAVKILQSLPDLDSLLVQDVVGGLMAWAAKVDGTFPQY.

ATP is bound by residues glycine 90, aspartate 111, 118–122 (SNLAR), lysine 135, and 179–180 (DN). An interaction with NFS1 region spans residues 156–236 (AQALTPATAL…QPPPAETVTN (81 aa)). Cysteine 220 and cysteine 223 together coordinate Zn(2+). The active-site Glycyl thioester intermediate; for adenylyltransferase activity is the cysteine 237. Zn(2+)-binding residues include cysteine 295 and cysteine 298. The cysteines at positions 314 and 322 are disulfide-linked. One can recognise a Rhodanese domain in the interval 345–453 (SGSPHLLLDV…WAAKVDGTFP (109 aa)). The Cysteine persulfide intermediate; for sulfurtransferase activity role is filled by cysteine 410. Cysteine 410 is subject to Cysteine persulfide.

It in the N-terminal section; belongs to the HesA/MoeB/ThiF family. UBA4 subfamily. Interacts with NFS1. Requires Zn(2+) as cofactor.

It is found in the cytoplasm. It localises to the cytosol. The enzyme catalyses [molybdopterin-synthase sulfur-carrier protein]-C-terminal Gly-Gly + ATP + H(+) = [molybdopterin-synthase sulfur-carrier protein]-C-terminal Gly-Gly-AMP + diphosphate. It catalyses the reaction [molybdopterin-synthase sulfur-carrier protein]-C-terminal Gly-Gly-AMP + S-sulfanyl-L-cysteinyl-[cysteine desulfurase] + AH2 = [molybdopterin-synthase sulfur-carrier protein]-C-terminal-Gly-aminoethanethioate + L-cysteinyl-[cysteine desulfurase] + A + AMP + 2 H(+). The protein operates within tRNA modification; 5-methoxycarbonylmethyl-2-thiouridine-tRNA biosynthesis. It functions in the pathway cofactor biosynthesis; molybdopterin biosynthesis. Its function is as follows. Plays a central role in 2-thiolation of mcm(5)S(2)U at tRNA wobble positions of cytosolic tRNA(Lys), tRNA(Glu) and tRNA(Gln). Also essential during biosynthesis of the molybdenum cofactor. Acts by mediating the C-terminal thiocarboxylation of sulfur carriers URM1 and MOCS2A. Its N-terminus first activates URM1 and MOCS2A as acyl-adenylates (-COAMP), then the persulfide sulfur on the catalytic cysteine is transferred to URM1 and MOCS2A to form thiocarboxylation (-COSH) of their C-terminus. The reaction probably involves hydrogen sulfide that is generated from the persulfide intermediate and that acts as a nucleophile towards URM1 and MOCS2A. Subsequently, a transient disulfide bond is formed. Does not use thiosulfate as sulfur donor; NFS1 acting as a sulfur donor for thiocarboxylation reactions. The protein is Adenylyltransferase and sulfurtransferase MOCS3 of Sus scrofa (Pig).